The sequence spans 278 residues: Proline-rich 28 kDa antigen homolog (278 aa).

An N-terminal signal peptide occupies residues 1-28 (MIQSTQTWRVLAGGLAATAMGVTVFAGG).

This sequence to M.tuberculosis Rv0040c.

The chain is Proline-rich 28 kDa antigen homolog from Mycobacterium leprae (strain TN).